A 480-amino-acid polypeptide reads, in one-letter code: Proline--tRNA ligase (480 aa).

The protein belongs to the class-II aminoacyl-tRNA synthetase family. ProS type 3 subfamily. As to quaternary structure, homodimer.

The protein localises to the cytoplasm. It catalyses the reaction tRNA(Pro) + L-proline + ATP = L-prolyl-tRNA(Pro) + AMP + diphosphate. Its function is as follows. Catalyzes the attachment of proline to tRNA(Pro) in a two-step reaction: proline is first activated by ATP to form Pro-AMP and then transferred to the acceptor end of tRNA(Pro). This Roseiflexus sp. (strain RS-1) protein is Proline--tRNA ligase.